We begin with the raw amino-acid sequence, 600 residues long: Zinc metalloproteinase-disintegrin-like cobrin (600 aa).

An N-terminal signal peptide occupies residues 1–8 (MIQLSWSS). Residues 9–179 (IILESGNVND…DEPIKKTSLL (171 aa)) constitute a propeptide that is removed on maturation. In terms of domain architecture, Peptidase M12B spans 193–388 (KYIEFYMVVD…DRPQCILNKP (196 aa)). Ca(2+)-binding residues include Glu196 and Asp280. 3 disulfides stabilise this stretch: Cys304–Cys383, Cys344–Cys367, and Cys346–Cys351. Zn(2+)-binding residues include His329, His333, and His339. Ca(2+) is bound by residues Cys383, Asn386, Ile398, Asn401, Phe403, Glu405, Glu408, and Asp411. The Disintegrin domain maps to 396 to 482 (PPICGNYFVE…ECPTDVFQRN (87 aa)). Cystine bridges form between Cys399–Cys428, Cys410–Cys423, Cys412–Cys418, Cys422–Cys445, Cys436–Cys442, Cys441–Cys467, Cys454–Cys474, Cys461–Cys492, Cys486–Cys497, Cys504–Cys554, Cys519–Cys562, Cys532–Cys542, Cys549–Cys588, and Cys582–Cys593. N-linked (GlcNAc...) asparagine glycosylation is present at Asn424. Positions 460-462 (DCD) match the D/ECD-tripeptide motif. The Ca(2+) site is built by Asp462, Leu463, Glu465, Asp477, and Val478.

It belongs to the venom metalloproteinase (M12B) family. P-III subfamily. P-IIIa sub-subfamily. In terms of assembly, monomer. It depends on Zn(2+) as a cofactor. As to expression, expressed by the venom gland.

It localises to the secreted. Snake venom zinc metalloproteinase that may cleave complement protein C3 into C3c-like (C3o). In Naja kaouthia (Monocled cobra), this protein is Zinc metalloproteinase-disintegrin-like cobrin.